Consider the following 377-residue polypeptide: MSFRAPNLIRSTVGRRAGQTLNLRSQVIRRRFATEGGPEITKPSAPRSSNTGYIFAGLGVAAVGAAYYFYGTGRTEHDSTNKADTVVREAVATVEAKTGLRRGKDEYQKVYNRIAETLDKEGYDDGSLAPVLLRLAWHASGTYSKADGTGGSNFATMRFKPEAEHSANNGLHVAREHMEKIKQEFPWISYGDLWTLGGVCAIQESGGPTIPWRPGRIDGYAAQVTPDGRLPDATQAQDHLRFIFNRMGFNDQEIVALSGAHAMGRCHPNRSGFDGPWTFSPVTFSNQYFALLRDEPWQWKKWTGPAQFEDKKTKTLMMLPTDMALVKDKSFKKYVDIYADNEEKFFSDFAKAFSKLIELGVPERQWAGEPWTMATSD.

The transit peptide at 1–32 (MSFRAPNLIRSTVGRRAGQTLNLRSQVIRRRF) directs the protein to the mitochondrion. The active-site Proton acceptor is His-138. His-261 contributes to the heme b binding site. Trp-277 acts as the Tryptophan radical intermediate in catalysis.

This sequence belongs to the peroxidase family. Cytochrome c peroxidase subfamily. In terms of assembly, forms a one-to-one complex with cytochrome c. Interacts with MID1 (via C-terminus); the interaction may contribute to cellular detoxification of radicals. Heme b is required as a cofactor.

The protein resides in the mitochondrion matrix. The protein localises to the mitochondrion intermembrane space. The enzyme catalyses 2 Fe(II)-[cytochrome c] + H2O2 + 2 H(+) = 2 Fe(III)-[cytochrome c] + 2 H2O. In terms of biological role, destroys radicals which are normally produced within the cells and which are toxic to biological systems. In Cryptococcus neoformans var. grubii serotype A (strain H99 / ATCC 208821 / CBS 10515 / FGSC 9487) (Filobasidiella neoformans var. grubii), this protein is Cytochrome c peroxidase, mitochondrial (CCP1).